A 444-amino-acid polypeptide reads, in one-letter code: Methylenetetrahydrofolate--tRNA-(uracil-5-)-methyltransferase TrmFO (444 aa).

Residue 10-15 coordinates FAD; that stretch reads GAGLAG.

This sequence belongs to the MnmG family. TrmFO subfamily. FAD is required as a cofactor.

The protein resides in the cytoplasm. It carries out the reaction uridine(54) in tRNA + (6R)-5,10-methylene-5,6,7,8-tetrahydrofolate + NADH + H(+) = 5-methyluridine(54) in tRNA + (6S)-5,6,7,8-tetrahydrofolate + NAD(+). The catalysed reaction is uridine(54) in tRNA + (6R)-5,10-methylene-5,6,7,8-tetrahydrofolate + NADPH + H(+) = 5-methyluridine(54) in tRNA + (6S)-5,6,7,8-tetrahydrofolate + NADP(+). Its function is as follows. Catalyzes the folate-dependent formation of 5-methyl-uridine at position 54 (M-5-U54) in all tRNAs. The sequence is that of Methylenetetrahydrofolate--tRNA-(uracil-5-)-methyltransferase TrmFO from Streptococcus agalactiae serotype III (strain NEM316).